The primary structure comprises 319 residues: Ferrochelatase (319 aa).

The Fe cation site is built by H192 and E271.

The protein belongs to the ferrochelatase family.

The protein localises to the cytoplasm. It catalyses the reaction heme b + 2 H(+) = protoporphyrin IX + Fe(2+). It participates in porphyrin-containing compound metabolism; protoheme biosynthesis; protoheme from protoporphyrin-IX: step 1/1. Its function is as follows. Catalyzes the ferrous insertion into protoporphyrin IX. In Geotalea uraniireducens (strain Rf4) (Geobacter uraniireducens), this protein is Ferrochelatase.